Consider the following 336-residue polypeptide: MFLKFCVVAFAICLSINLSEGAPSSETIYKFAIIADLDRKSISQKNDNNYKSIVKIGQLNQVGRKFNFAMENKDHEIFTKYAYKGRGAELSEFLVYKWKLYTFDDKSGIVFKLKNNADLVPWVILANGNGDQVDGFKAEWATTKGDKMYVGSTGISWSDSTGKLNSNSLWIKEINQDGKVLSSNWKEYYDKMKSAMNMPKGFIWHEAVNWSKKKNQWVLLPRKCSELPFDTETEETIGCNKIIIASENFQKINSIDIKGTPFDPAAGFSSFKFLPDSDDQILIALKTIEKNGKTATYLTVIDITGKVLMSDKIVNKDKFEGIVLLKSTEGFLKRKE.

Positions 1–21 are cleaved as a signal peptide; that stretch reads MFLKFCVVAFAICLSINLSEG. Residue Asn-209 is glycosylated (N-linked (GlcNAc...) asparagine).

Belongs to the apyrase family. The cofactor is Ca(2+). In terms of tissue distribution, salivary gland (at protein level).

Its subcellular location is the secreted. The catalysed reaction is a ribonucleoside 5'-triphosphate + 2 H2O = a ribonucleoside 5'-phosphate + 2 phosphate + 2 H(+). In terms of biological role, facilitates hematophagy by inhibiting ADP- and collagen-dependent platelet aggregation in the host. Cleaves adenosine triphosphate (ATP) and adenosine diphosphate (ADP) to adenosine monophosphate (AMP) and inorganic phosphate in calcium-dependent manner. The chain is Apyrase from Phlebotomus duboscqi (Sandfly).